The sequence spans 328 residues: DNA repair protein RAD51 homolog 4 (328 aa).

The tract at residues 1-83 (MGVLRVGLCP…ELKTSTAILS (83 aa)) is preferentially binds ssDNA. 107 to 114 (GGPGSGKT) is a binding site for ATP.

It belongs to the RecA family. RAD51 subfamily. In terms of assembly, part of the BCDX2 complex consisting of RAD51B, RAD51C, RAD51D and XRCC2; the complex has a ring-like structure arranged into a flat disc around a central channel. In the absence of DNA, the BCDX2 subcomplex XRCC2:RAD51D formed a multimeric ring structure; in the presence of single-stranded DNA it formed a filamentous structure with the ssDNA. Interacts with SWSAP1 and ZSWIM7; involved in homologous recombination repair. Interacts with BLM; required for stimulation of BLM activity by the BCDX2 subcomplex XRCC2:RAD51D. Expressed in colon, prostate, spleen, testis, ovary, thymus and small intestine. Weakly expressed in leukocytes.

Its subcellular location is the nucleus. The protein localises to the cytoplasm. It localises to the cytoskeleton. The protein resides in the microtubule organizing center. It is found in the centrosome. Its subcellular location is the chromosome. The protein localises to the telomere. Functionally, involved in the homologous recombination repair (HRR) pathway of double-stranded DNA breaks arising during DNA replication or induced by DNA-damaging agents. Bind to single-stranded DNA (ssDNA) and has DNA-dependent ATPase activity. Part of the RAD51 paralog protein complex BCDX2 which acts in the BRCA1-BRCA2-dependent HR pathway. Upon DNA damage, BCDX2 acts downstream of BRCA2 recruitment and upstream of RAD51 recruitment. BCDX2 binds predominantly to the intersection of the four duplex arms of the Holliday junction and to junction of replication forks. The BCDX2 complex was originally reported to bind single-stranded DNA, single-stranded gaps in duplex DNA and specifically to nicks in duplex DNA. Involved in telomere maintenance. The BCDX2 subcomplex XRCC2:RAD51D can stimulate Holliday junction resolution by BLM. This chain is DNA repair protein RAD51 homolog 4 (RAD51D), found in Homo sapiens (Human).